A 547-amino-acid chain; its full sequence is Chaperonin GroEL 2 (547 aa).

ATP contacts are provided by residues 29-32, 86-90, Gly-418, 482-484, and Asp-498; these read TLGP, DGTTT, and NAA.

Belongs to the chaperonin (HSP60) family. As to quaternary structure, forms a cylinder of 14 subunits composed of two heptameric rings stacked back-to-back. Interacts with the co-chaperonin GroES.

It is found in the cytoplasm. The catalysed reaction is ATP + H2O + a folded polypeptide = ADP + phosphate + an unfolded polypeptide.. Functionally, together with its co-chaperonin GroES, plays an essential role in assisting protein folding. The GroEL-GroES system forms a nano-cage that allows encapsulation of the non-native substrate proteins and provides a physical environment optimized to promote and accelerate protein folding. The protein is Chaperonin GroEL 2 of Corynebacterium efficiens (strain DSM 44549 / YS-314 / AJ 12310 / JCM 11189 / NBRC 100395).